The sequence spans 200 residues: dITP/XTP pyrophosphatase (200 aa).

7-12 (TSNKHK) lines the substrate pocket. Mg(2+)-binding residues include E38 and D73. Catalysis depends on D73, which acts as the Proton acceptor. Substrate contacts are provided by residues S74, 154 to 157 (FGYD), K177, and 182 to 183 (HR).

It belongs to the HAM1 NTPase family. As to quaternary structure, homodimer. Mg(2+) serves as cofactor.

The enzyme catalyses XTP + H2O = XMP + diphosphate + H(+). It catalyses the reaction dITP + H2O = dIMP + diphosphate + H(+). It carries out the reaction ITP + H2O = IMP + diphosphate + H(+). Its function is as follows. Pyrophosphatase that catalyzes the hydrolysis of nucleoside triphosphates to their monophosphate derivatives, with a high preference for the non-canonical purine nucleotides XTP (xanthosine triphosphate), dITP (deoxyinosine triphosphate) and ITP. Seems to function as a house-cleaning enzyme that removes non-canonical purine nucleotides from the nucleotide pool, thus preventing their incorporation into DNA/RNA and avoiding chromosomal lesions. This chain is dITP/XTP pyrophosphatase, found in Campylobacter jejuni subsp. jejuni serotype O:2 (strain ATCC 700819 / NCTC 11168).